Consider the following 219-residue polypeptide: Ribose-5-phosphate isomerase A (219 aa).

Substrate-binding positions include 28–31, 81–84, and 94–97; these read TGST, DGAD, and KGGG. The active-site Proton acceptor is Glu-103. Position 121 (Lys-121) interacts with substrate.

Belongs to the ribose 5-phosphate isomerase family. As to quaternary structure, homodimer.

The catalysed reaction is aldehydo-D-ribose 5-phosphate = D-ribulose 5-phosphate. The protein operates within carbohydrate degradation; pentose phosphate pathway; D-ribose 5-phosphate from D-ribulose 5-phosphate (non-oxidative stage): step 1/1. In terms of biological role, catalyzes the reversible conversion of ribose-5-phosphate to ribulose 5-phosphate. This chain is Ribose-5-phosphate isomerase A, found in Shigella boydii serotype 18 (strain CDC 3083-94 / BS512).